Here is a 272-residue protein sequence, read N- to C-terminus: MEKIKIIVASDSIGETAELVARAGISQFNPKQCKNELLRYPYIESFEDVDEVIQVAKDTNAIIVYTLIKPEMKQYMSEKVAEFQLKSVDIMGPLMDLLSASVEEKPYNEPGIVHRLDDAYFKKIDAIEFAVKYDDGKDPKGLPKADIVLLGISRTSKTPLSQYLAHKSYKVMNVPIVPEVTPPDGLYDINPKKCIALKISEEKLNRIRKERLKQLGLGDTARYATEARIQEELNYFEEIVSEIGCPVIDVSQKAIEETANDIIHYIEQNKSK.

ADP is bound at residue 151–158 (GISRTSKT).

The protein belongs to the pyruvate, phosphate/water dikinase regulatory protein family. PDRP subfamily.

It catalyses the reaction N(tele)-phospho-L-histidyl/L-threonyl-[pyruvate, phosphate dikinase] + ADP = N(tele)-phospho-L-histidyl/O-phospho-L-threonyl-[pyruvate, phosphate dikinase] + AMP + H(+). The catalysed reaction is N(tele)-phospho-L-histidyl/O-phospho-L-threonyl-[pyruvate, phosphate dikinase] + phosphate + H(+) = N(tele)-phospho-L-histidyl/L-threonyl-[pyruvate, phosphate dikinase] + diphosphate. Bifunctional serine/threonine kinase and phosphorylase involved in the regulation of the pyruvate, phosphate dikinase (PPDK) by catalyzing its phosphorylation/dephosphorylation. The chain is Putative pyruvate, phosphate dikinase regulatory protein from Staphylococcus aureus (strain USA300).